The primary structure comprises 56 residues: Large ribosomal subunit protein bL32c (56 aa).

It belongs to the bacterial ribosomal protein bL32 family.

It is found in the plastid. The protein localises to the chloroplast. The sequence is that of Large ribosomal subunit protein bL32c from Tupiella akineta (Green alga).